The primary structure comprises 254 residues: 5-oxoprolinase subunit A (254 aa).

This sequence belongs to the LamB/PxpA family. Forms a complex composed of PxpA, PxpB and PxpC.

It catalyses the reaction 5-oxo-L-proline + ATP + 2 H2O = L-glutamate + ADP + phosphate + H(+). Catalyzes the cleavage of 5-oxoproline to form L-glutamate coupled to the hydrolysis of ATP to ADP and inorganic phosphate. This is 5-oxoprolinase subunit A from Acinetobacter baylyi (strain ATCC 33305 / BD413 / ADP1).